The chain runs to 167 residues: Photosystem I assembly protein Ycf3 (167 aa).

TPR repeat units follow at residues Ala35–Ala68, Ser72–Leu105, and Gly120–Ser153.

This sequence belongs to the Ycf3 family.

The protein localises to the plastid. It is found in the chloroplast thylakoid membrane. Functionally, essential for the assembly of the photosystem I (PSI) complex. May act as a chaperone-like factor to guide the assembly of the PSI subunits. The polypeptide is Photosystem I assembly protein Ycf3 (Chlorokybus atmophyticus (Soil alga)).